Reading from the N-terminus, the 162-residue chain is SsrA-binding protein (162 aa).

The tract at residues 140–162 (DKRETAAKRDWSRQKSRLMKDHG) is disordered.

It belongs to the SmpB family.

Its subcellular location is the cytoplasm. Its function is as follows. Required for rescue of stalled ribosomes mediated by trans-translation. Binds to transfer-messenger RNA (tmRNA), required for stable association of tmRNA with ribosomes. tmRNA and SmpB together mimic tRNA shape, replacing the anticodon stem-loop with SmpB. tmRNA is encoded by the ssrA gene; the 2 termini fold to resemble tRNA(Ala) and it encodes a 'tag peptide', a short internal open reading frame. During trans-translation Ala-aminoacylated tmRNA acts like a tRNA, entering the A-site of stalled ribosomes, displacing the stalled mRNA. The ribosome then switches to translate the ORF on the tmRNA; the nascent peptide is terminated with the 'tag peptide' encoded by the tmRNA and targeted for degradation. The ribosome is freed to recommence translation, which seems to be the essential function of trans-translation. The sequence is that of SsrA-binding protein from Roseobacter denitrificans (strain ATCC 33942 / OCh 114) (Erythrobacter sp. (strain OCh 114)).